The sequence spans 473 residues: Bifunctional protein GlmU (473 aa).

The interval 1-240 (MAIHPLDVVI…AAQVAGVNSP (240 aa)) is pyrophosphorylase. UDP-N-acetyl-alpha-D-glucosamine-binding positions include K25, Q83, 88-89 (GT), 110-112 (SGD), G147, E165, and N238. Residue D112 coordinates Mg(2+). A Mg(2+)-binding site is contributed by N238. The interval 241-261 (VQLAELERVYQQRLATTLMEQ) is linker. The N-acetyltransferase stretch occupies residues 262–473 (GVRLADPARL…WARPVKKPGV (212 aa)). The UDP-N-acetyl-alpha-D-glucosamine site is built by R348 and K366. The active-site Proton acceptor is H378. UDP-N-acetyl-alpha-D-glucosamine-binding residues include Y381 and N392. Residues A395, 401 to 402 (NY), S420, G438, and R455 each bind acetyl-CoA.

This sequence in the N-terminal section; belongs to the N-acetylglucosamine-1-phosphate uridyltransferase family. The protein in the C-terminal section; belongs to the transferase hexapeptide repeat family. Homotrimer. Mg(2+) serves as cofactor.

The protein resides in the cytoplasm. The catalysed reaction is alpha-D-glucosamine 1-phosphate + acetyl-CoA = N-acetyl-alpha-D-glucosamine 1-phosphate + CoA + H(+). It catalyses the reaction N-acetyl-alpha-D-glucosamine 1-phosphate + UTP + H(+) = UDP-N-acetyl-alpha-D-glucosamine + diphosphate. The protein operates within nucleotide-sugar biosynthesis; UDP-N-acetyl-alpha-D-glucosamine biosynthesis; N-acetyl-alpha-D-glucosamine 1-phosphate from alpha-D-glucosamine 6-phosphate (route II): step 2/2. It functions in the pathway nucleotide-sugar biosynthesis; UDP-N-acetyl-alpha-D-glucosamine biosynthesis; UDP-N-acetyl-alpha-D-glucosamine from N-acetyl-alpha-D-glucosamine 1-phosphate: step 1/1. It participates in bacterial outer membrane biogenesis; LPS lipid A biosynthesis. Catalyzes the last two sequential reactions in the de novo biosynthetic pathway for UDP-N-acetylglucosamine (UDP-GlcNAc). The C-terminal domain catalyzes the transfer of acetyl group from acetyl coenzyme A to glucosamine-1-phosphate (GlcN-1-P) to produce N-acetylglucosamine-1-phosphate (GlcNAc-1-P), which is converted into UDP-GlcNAc by the transfer of uridine 5-monophosphate (from uridine 5-triphosphate), a reaction catalyzed by the N-terminal domain. The polypeptide is Bifunctional protein GlmU (Polaromonas naphthalenivorans (strain CJ2)).